A 148-amino-acid polypeptide reads, in one-letter code: D-aminoacyl-tRNA deacylase (148 aa).

The short motif at 137 to 138 (GP) is the Gly-cisPro motif, important for rejection of L-amino acids element.

This sequence belongs to the DTD family. As to quaternary structure, homodimer.

Its subcellular location is the cytoplasm. It catalyses the reaction glycyl-tRNA(Ala) + H2O = tRNA(Ala) + glycine + H(+). The enzyme catalyses a D-aminoacyl-tRNA + H2O = a tRNA + a D-alpha-amino acid + H(+). An aminoacyl-tRNA editing enzyme that deacylates mischarged D-aminoacyl-tRNAs. Also deacylates mischarged glycyl-tRNA(Ala), protecting cells against glycine mischarging by AlaRS. Acts via tRNA-based rather than protein-based catalysis; rejects L-amino acids rather than detecting D-amino acids in the active site. By recycling D-aminoacyl-tRNA to D-amino acids and free tRNA molecules, this enzyme counteracts the toxicity associated with the formation of D-aminoacyl-tRNA entities in vivo and helps enforce protein L-homochirality. This chain is D-aminoacyl-tRNA deacylase, found in Aquifex aeolicus (strain VF5).